Here is a 227-residue protein sequence, read N- to C-terminus: tRNA (guanine-N(1)-)-methyltransferase (227 aa).

S-adenosyl-L-methionine-binding positions include glycine 112 and 132–137 (IGDFIL).

The protein belongs to the RNA methyltransferase TrmD family. As to quaternary structure, homodimer.

It localises to the cytoplasm. The enzyme catalyses guanosine(37) in tRNA + S-adenosyl-L-methionine = N(1)-methylguanosine(37) in tRNA + S-adenosyl-L-homocysteine + H(+). Its function is as follows. Specifically methylates guanosine-37 in various tRNAs. This chain is tRNA (guanine-N(1)-)-methyltransferase, found in Sulfurovum sp. (strain NBC37-1).